Here is a 386-residue protein sequence, read N- to C-terminus: Acyl-lipid omega-3 desaturase (cytochrome b5), endoplasmic reticulum (386 aa).

A disordered region spans residues 1 to 30; sequence MVVAMDQRTNVNGDPGAGDRKKEERFDPSA. The span at 17–27 shows a compositional bias: basic and acidic residues; the sequence is AGDRKKEERFD. Residues 63–83 traverse the membrane as a helical segment; it reads IIAVAALAIAAVYVDSWFLWP. Positions 101-105 match the Histidine box-1 motif; that stretch reads HDCGH. The Histidine box-2 motif lies at 137-141; that stretch reads HRTHH. The next 2 membrane-spanning stretches (helical) occupy residues 220–240 and 242–262; these read WSIMFVSLIALSFVFGPLAVL and VYGVPYIIFVMWLDAVTYLHH. Positions 304–308 match the Histidine box-3 motif; the sequence is HVIHH.

Belongs to the fatty acid desaturase type 1 family. As to expression, abundant in leaves and seedlings. Barely detectable in root tissue.

It is found in the endoplasmic reticulum membrane. The catalysed reaction is a (9Z,12Z)-octadecadienoyl-containing glycerolipid + 2 Fe(II)-[cytochrome b5] + O2 + 2 H(+) = (9Z,12Z,15Z)-octadecatrienoyl-containing glycerolipid + 2 Fe(III)-[cytochrome b5] + 2 H2O. The protein operates within lipid metabolism; polyunsaturated fatty acid biosynthesis. Microsomal (ER) omega-3 fatty acid desaturase introduces the third double bond in the biosynthesis of 18:3 fatty acids, important constituents of plant membranes. It is thought to use cytochrome b5 as an electron donor and to act on fatty acids esterified to phosphatidylcholine and, possibly, other phospholipids. The chain is Acyl-lipid omega-3 desaturase (cytochrome b5), endoplasmic reticulum from Arabidopsis thaliana (Mouse-ear cress).